The chain runs to 54 residues: Photosystem II reaction center protein K (54 aa).

Residues 1 to 17 constitute a propeptide that is removed on maturation; it reads MSFITLNNFFNTNTFFG. The chain crosses the membrane as a helical span at residues 29-49; that stretch reads LIDVLPIIPVLFFLLAFVWQA.

The protein belongs to the PsbK family. As to quaternary structure, PSII is composed of 1 copy each of membrane proteins PsbA, PsbB, PsbC, PsbD, PsbE, PsbF, PsbH, PsbI, PsbJ, PsbK, PsbL, PsbM, PsbT, PsbY, PsbZ, Psb30/Ycf12, at least 3 peripheral proteins of the oxygen-evolving complex and a large number of cofactors. It forms dimeric complexes.

The protein resides in the plastid. Its subcellular location is the chloroplast thylakoid membrane. In terms of biological role, one of the components of the core complex of photosystem II (PSII). PSII is a light-driven water:plastoquinone oxidoreductase that uses light energy to abstract electrons from H(2)O, generating O(2) and a proton gradient subsequently used for ATP formation. It consists of a core antenna complex that captures photons, and an electron transfer chain that converts photonic excitation into a charge separation. This Euglena gracilis protein is Photosystem II reaction center protein K.